We begin with the raw amino-acid sequence, 492 residues long: METQWTRMTANEAAEIIQHNDMVAFSGFTPAGSPKALPTAIARRANEQHEAKKPYQIRLLTGASISAAADDVLSDADAVSWRAPYQTSSGLRKKINQGAVSFVDLHLSEVAQMVNYGFFGDIDVAVIEASALAPDGRVWLTSGIGNAPTWLLRAKKVIIELNHYHDPRVAELADIVIPGAPPRRNSVSIFHAMDRVGTRYVQIDPKKIVAVVETNLPDAGNMLDKQNPMCQQIADNVVTFLLQEMAHGRIPPEFLPLQSGVGNINNAVMARLGENPVIPPFMMYSEVLQESVVHLLETGKISGASASSLTISADSLRKIYDNMDYFASRIVLRPQEISNNPEIIRRLGVIALNVGLEFDIYGHANSTHVAGVDLMNGIGGSGDFERNAYLSIFMAPSIAKEGKISTVVPMCSHVDHSEHSVKVIITEQGIADLRGLSPLQRARTIIDNCAHPMYRDYLHRYLENAPGGHIHHDLSHVFDLHRNLIATGSMLG.

260-264 lines the CoA pocket; the sequence is GVGNI. The active-site 5-glutamyl coenzyme A thioester intermediate is E286. N376 and G380 together coordinate CoA.

It belongs to the acetyl-CoA hydrolase/transferase family.

It carries out the reaction propanoyl-CoA + succinate = propanoate + succinyl-CoA. Functionally, catalyzes the transfer of coenzyme A from propionyl-CoA to succinate. Could be part of a pathway that converts succinate to propionate. The sequence is that of Propanoyl-CoA:succinate CoA transferase from Escherichia coli (strain K12).